A 361-amino-acid polypeptide reads, in one-letter code: MAQPVQSIDVLLIEHAELELALADPELHSNPAEARKAGRRFARLAPIVATHRKLISARDDLQTARELAAGDESFADEIAELESRIAELTTQLTDMLAPHDPHGPDDIVLEVKSGEGGEESALFAADLARMYIRYAERHGWTVTVLDETTSDLGGYKDATLAISHKGASDGDAVDGVWSRMKFEGGVHRVQRVPVTESQGRVHTSAAGVLVYPEPEEIGEVHIDESDLRIDVYRSSGKGGQGVNTTDSAVRITHLPTGVVVTCQNERSQLQNKTRALQVLAARLQAMAEEQALANASADRASQIRTVDRSERIRTYNFPENRITDHRIGYKAHNLDQVLDGDLDALFDALSAADKQSRLQQV.

Gln240 carries the post-translational modification N5-methylglutamine.

The protein belongs to the prokaryotic/mitochondrial release factor family. Methylated by PrmC. Methylation increases the termination efficiency of RF1.

It is found in the cytoplasm. In terms of biological role, peptide chain release factor 1 directs the termination of translation in response to the peptide chain termination codons UAG and UAA. The sequence is that of Peptide chain release factor 1 from Mycobacterium leprae (strain Br4923).